We begin with the raw amino-acid sequence, 330 residues long: Heat-inducible transcription repressor HrcA (330 aa).

Belongs to the HrcA family.

Negative regulator of class I heat shock genes (grpE-dnaK-dnaJ and groELS operons). Prevents heat-shock induction of these operons. In Synechococcus sp. (strain RCC307), this protein is Heat-inducible transcription repressor HrcA.